The following is a 484-amino-acid chain: tRNA sulfurtransferase (484 aa).

A THUMP domain is found at Ala63–Lys167. ATP is bound by residues Leu185 to Ile186, Lys267, Gly289, and Gln298. A disulfide bridge connects residues Cys346 and Cys458. In terms of domain architecture, Rhodanese spans Phe406–Pro484. The Cysteine persulfide intermediate role is filled by Cys458.

The protein belongs to the ThiI family.

It localises to the cytoplasm. The enzyme catalyses [ThiI sulfur-carrier protein]-S-sulfanyl-L-cysteine + a uridine in tRNA + 2 reduced [2Fe-2S]-[ferredoxin] + ATP + H(+) = [ThiI sulfur-carrier protein]-L-cysteine + a 4-thiouridine in tRNA + 2 oxidized [2Fe-2S]-[ferredoxin] + AMP + diphosphate. It carries out the reaction [ThiS sulfur-carrier protein]-C-terminal Gly-Gly-AMP + S-sulfanyl-L-cysteinyl-[cysteine desulfurase] + AH2 = [ThiS sulfur-carrier protein]-C-terminal-Gly-aminoethanethioate + L-cysteinyl-[cysteine desulfurase] + A + AMP + 2 H(+). Its pathway is cofactor biosynthesis; thiamine diphosphate biosynthesis. In terms of biological role, catalyzes the ATP-dependent transfer of a sulfur to tRNA to produce 4-thiouridine in position 8 of tRNAs, which functions as a near-UV photosensor. Also catalyzes the transfer of sulfur to the sulfur carrier protein ThiS, forming ThiS-thiocarboxylate. This is a step in the synthesis of thiazole, in the thiamine biosynthesis pathway. The sulfur is donated as persulfide by IscS. In Psychromonas ingrahamii (strain DSM 17664 / CCUG 51855 / 37), this protein is tRNA sulfurtransferase.